A 112-amino-acid polypeptide reads, in one-letter code: Small ribosomal subunit protein bS6 (112 aa).

Belongs to the bacterial ribosomal protein bS6 family.

In terms of biological role, binds together with bS18 to 16S ribosomal RNA. This is Small ribosomal subunit protein bS6 from Chlamydia trachomatis serovar L2 (strain ATCC VR-902B / DSM 19102 / 434/Bu).